The following is a 679-amino-acid chain: G-protein-signaling modulator 2 (679 aa).

Residues 22–357 (ASCLELALEG…HLEISREVGD (336 aa)) are important for interaction with NUMA1; INSC and FRMPD1. TPR repeat units lie at residues 24-57 (CLEL…GTED), 62-95 (SAIY…ARTI), 102-135 (AKAS…SREL), 142-184 (ARAL…AVDL), 202-235 (GRAF…AKEF), 242-275 (RRAY…ARQL), 282-315 (AQSC…AQEL), and 322-355 (GRAC…SREV). A phosphoserine mark is found at serine 408 and serine 484. Threonine 487 bears the Phosphothreonine mark. The 23-residue stretch at 490-512 (DEGFFDLLRRFQSNRMDDQRCHL) folds into the GoLoco 1 domain. 2 positions are modified to phosphoserine: serine 540 and serine 564. 3 GoLoco domains span residues 543–565 (TDEF…RASF), 594–616 (DEDF…RCAP), and 628–650 (DEDF…RVLL). Residues arginine 608, arginine 613, arginine 642, and arginine 647 each contribute to the GDP site.

Belongs to the GPSM family. As to quaternary structure, interacts with the dynein-dynactin complex; this interaction is inhibited in a PLK1-dependent manner. Part of a spindle orientation complex at least composed of GNAI1, GPSM2 and NUMA1. Interacts with LLGL2. Interacts (via TPR repeat region) with INSC/inscuteable. Interacts (via TPR repeat region) with NUMA1 (via C-terminus); this interaction is direct, inhibited in a PLK1-dependent manner and promotes spindle pole organization. INSC and NUMA1 compete for the same binding site, but INSC has higher affinity and can displace NUMA1 (in vitro). Interacts with GNAI2. Interacts (via GoLoco domains) with the GDP-bound form of GNAI1 and GNAI3; has much lower affinity for the GTP-bound form. Interaction with GDP-bound GNAI3 strongly enhances the affinity for NUMA1. Interacts (via TPR repeat region) with FRMPD1. INSC and FRMPD1 compete for the same binding site, but INSC has higher affinity and can displace FRMPD1 (in vitro). Interacts (via TPR repeat region) with FRMPD4. Identified in a complex with INSC and F2RL2/Par3. Interacts with TASOR. In terms of tissue distribution, detected in brain and liver (at protein level). Detected in brain, spleen, liver and testis, and at lower levels in heart, lung and kidney. Enriched in the ventricular zone of the developing central nervous systems. Expressed in proximal colon, ileum, ovary, Sertoli cells of the testis and granular cells within the cerebellum.

It is found in the cytoplasm. The protein resides in the cell cortex. Its subcellular location is the cytoskeleton. The protein localises to the spindle pole. It localises to the lateral cell membrane. Functionally, plays an important role in mitotic spindle pole organization via its interaction with NUMA1. Required for cortical dynein-dynactin complex recruitment during metaphase. Plays a role in metaphase spindle orientation. Plays an important role in asymmetric cell divisions. Has guanine nucleotide dissociation inhibitor (GDI) activity towards G(i) alpha proteins, such as GNAI1 and GNAI3, and thereby regulates their activity. The protein is G-protein-signaling modulator 2 (Gpsm2) of Mus musculus (Mouse).